The chain runs to 225 residues: Heptaprenylglyceryl phosphate synthase (225 aa).

A sn-glycerol 1-phosphate-binding site is contributed by Lys6. Mg(2+) is bound by residues Asp8 and Thr34. Sn-glycerol 1-phosphate contacts are provided by residues 153–158, Gly183, and 203–204; these read YIEYSG and GN.

The protein belongs to the GGGP/HepGP synthase family. Group I subfamily. As to quaternary structure, homodimer. Mg(2+) is required as a cofactor.

The catalysed reaction is sn-glycerol 1-phosphate + all-trans-heptaprenyl diphosphate = 3-heptaprenyl-sn-glycero-1-phosphate + diphosphate. It participates in membrane lipid metabolism; glycerophospholipid metabolism. Functionally, prenyltransferase that catalyzes in vivo the transfer of the heptaprenyl moiety of heptaprenyl pyrophosphate (HepPP; 35 carbon atoms) to the C3 hydroxyl of sn-glycerol-1-phosphate (G1P), producing heptaprenylglyceryl phosphate (HepGP). This reaction is an ether-bond-formation step in the biosynthesis of archaea-type G1P-based membrane lipids found in Bacillales. The sequence is that of Heptaprenylglyceryl phosphate synthase from Listeria welshimeri serovar 6b (strain ATCC 35897 / DSM 20650 / CCUG 15529 / CIP 8149 / NCTC 11857 / SLCC 5334 / V8).